Here is a 110-residue protein sequence, read N- to C-terminus: U1-lycotoxin-Ls1cc (110 aa).

A signal peptide spans 1 to 20; it reads MKFVLLFGVLLVTLFSYSSA. A propeptide spanning residues 21-44 is cleaved from the precursor; it reads EMLDDFDQADEDELLSLIEKEEAR. Intrachain disulfides connect C47–C62, C54–C71, C61–C89, and C73–C87.

It belongs to the neurotoxin 19 (CSTX) family. 03 subfamily. As to expression, expressed by the venom gland.

The protein resides in the secreted. This chain is U1-lycotoxin-Ls1cc, found in Lycosa singoriensis (Wolf spider).